The sequence spans 391 residues: Elongation factor Tu (391 aa).

The tr-type G domain occupies 10 to 201; it reads KPHVNIGTVG…AVDEYIPTPE (192 aa). The interval 19–26 is G1; the sequence is GHVDHGKT. GTP is bound at residue 19-26; that stretch reads GHVDHGKT. Residue threonine 26 coordinates Mg(2+). The segment at 55-59 is G2; the sequence is GITIS. Positions 76–79 are G3; sequence DCPG. Residues 76–80 and 131–134 each bind GTP; these read DCPGH and NKVD. Positions 131-134 are G4; the sequence is NKVD. Residues 169-171 are G5; it reads SAL.

The protein belongs to the TRAFAC class translation factor GTPase superfamily. Classic translation factor GTPase family. EF-Tu/EF-1A subfamily. Monomer.

Its subcellular location is the cytoplasm. The enzyme catalyses GTP + H2O = GDP + phosphate + H(+). In terms of biological role, GTP hydrolase that promotes the GTP-dependent binding of aminoacyl-tRNA to the A-site of ribosomes during protein biosynthesis. The protein is Elongation factor Tu of Ruegeria sp. (strain TM1040) (Silicibacter sp.).